A 67-amino-acid polypeptide reads, in one-letter code: Protein AaeX (67 aa).

2 helical membrane-spanning segments follow: residues 3–23 (LFPVIVVFGLSFPPIFFELLL) and 43–63 (FVWHPALFNTALYCCLFYLIS).

This sequence belongs to the AaeX family.

The protein localises to the cell membrane. This chain is Protein AaeX, found in Salmonella agona (strain SL483).